A 501-amino-acid polypeptide reads, in one-letter code: Glucose-6-phosphate exchanger SLC37A2 (501 aa).

The chain crosses the membrane as a helical span at residues 19–39 (SWFRGLILLLTFLIYACYHMS). N-linked (GlcNAc...) asparagine glycosylation is found at Asn53, Asn62, and Asn68. 5 consecutive transmembrane segments (helical) span residues 88 to 108 (GGVD…SGVF), 118 to 138 (LSAG…GYFW), 145 to 165 (YFVV…PSVV), 189 to 209 (SVGN…QWGL), and 210 to 230 (SFIV…LFLI). The tract at residues 240–262 (PPQHHGEPAENQDNPEDPGNSPC) is disordered. 6 helical membrane passes run 302–322 (LCLL…PLYI), 334–354 (GDLS…AGLV), 362–382 (ATTC…YNYI), 391–411 (IVML…ITTA), 434–454 (AIID…AGLI), and 462–482 (VFYM…RLVY).

Belongs to the major facilitator superfamily. Organophosphate:Pi antiporter (OPA) (TC 2.A.1.4) family. As to expression, detected in intestine and pancreas. Lower expression is also detected in liver and kidney.

It localises to the endoplasmic reticulum membrane. The enzyme catalyses D-glucose 6-phosphate(in) + phosphate(out) = D-glucose 6-phosphate(out) + phosphate(in). Its activity is regulated as follows. Inhibited by vanadate but not by chlorogenic acid. Inorganic phosphate and glucose-6-phosphate antiporter. May transport cytoplasmic glucose-6-phosphate into the lumen of the endoplasmic reticulum and translocate inorganic phosphate into the opposite direction. Independent of a lumenal glucose-6-phosphatase. May not play a role in homeostatic regulation of blood glucose levels. The protein is Glucose-6-phosphate exchanger SLC37A2 of Homo sapiens (Human).